The chain runs to 857 residues: Cadherin-related family member 1a (857 aa).

Positions 1 to 25 are cleaved as a signal peptide; the sequence is MKNAREIQFSSFLLLAHFCFVGAQS. Topologically, residues 26–709 are extracellular; it reads DYAPYFYDNG…RENPMHFLGL (684 aa). 6 Cadherin domains span residues 40–139, 140–252, 253–359, 365–478, 479–582, and 574–693; these read NGNM…RPQF, QNMP…PPIF, IGTP…PPTF, PQNV…APKF, TSDF…PPAF, and DLND…GPLT. Residues 710–730 form a helical membrane-spanning segment; it reads ISGVILILVFVTVIISTVIFV. At 731–857 the chain is on the cytoplasmic side; the sequence is RRNKANRILP…LEQKNMANRY (127 aa). A disordered region spans residues 746–765; the sequence is RKKRKPQKQDDFQEPFREEQ. Residues 752–765 are compositionally biased toward basic and acidic residues; it reads QKQDDFQEPFREEQ.

In terms of tissue distribution, expressed in photoreceptor cells of the outer nuclear layer of the retina and in the pinal gland.

Its subcellular location is the membrane. Its function is as follows. Potential calcium-dependent cell-adhesion protein. Plays a role in the organization of retinal cell layers and Muller glia morphology. This chain is Cadherin-related family member 1a, found in Danio rerio (Zebrafish).